The sequence spans 113 residues: Putative pterin-4-alpha-carbinolamine dehydratase (113 aa).

This sequence belongs to the pterin-4-alpha-carbinolamine dehydratase family.

It catalyses the reaction (4aS,6R)-4a-hydroxy-L-erythro-5,6,7,8-tetrahydrobiopterin = (6R)-L-erythro-6,7-dihydrobiopterin + H2O. This Legionella pneumophila (strain Lens) protein is Putative pterin-4-alpha-carbinolamine dehydratase.